The sequence spans 172 residues: Nicotinamide-nucleotide adenylyltransferase (172 aa).

This sequence belongs to the archaeal NMN adenylyltransferase family.

Its subcellular location is the cytoplasm. It catalyses the reaction beta-nicotinamide D-ribonucleotide + ATP + H(+) = diphosphate + NAD(+). It participates in cofactor biosynthesis; NAD(+) biosynthesis; NAD(+) from nicotinamide D-ribonucleotide: step 1/1. The protein is Nicotinamide-nucleotide adenylyltransferase of Aeropyrum pernix (strain ATCC 700893 / DSM 11879 / JCM 9820 / NBRC 100138 / K1).